The primary structure comprises 73 residues: Putative membrane protein insertion efficiency factor (73 aa).

This sequence belongs to the UPF0161 family.

It localises to the cell inner membrane. In terms of biological role, could be involved in insertion of integral membrane proteins into the membrane. In Neisseria meningitidis serogroup C (strain 053442), this protein is Putative membrane protein insertion efficiency factor.